The sequence spans 196 residues: Pyridoxal 5'-phosphate synthase subunit PdxT (196 aa).

Glycine 46–serine 48 provides a ligand contact to L-glutamine. Residue cysteine 78 is the Nucleophile of the active site. L-glutamine-binding positions include arginine 105 and isoleucine 134–arginine 135. Residues histidine 170 and glutamate 172 each act as charge relay system in the active site.

The protein belongs to the glutaminase PdxT/SNO family. In terms of assembly, in the presence of PdxS, forms a dodecamer of heterodimers. Only shows activity in the heterodimer.

The enzyme catalyses aldehydo-D-ribose 5-phosphate + D-glyceraldehyde 3-phosphate + L-glutamine = pyridoxal 5'-phosphate + L-glutamate + phosphate + 3 H2O + H(+). It carries out the reaction L-glutamine + H2O = L-glutamate + NH4(+). Its pathway is cofactor biosynthesis; pyridoxal 5'-phosphate biosynthesis. In terms of biological role, catalyzes the hydrolysis of glutamine to glutamate and ammonia as part of the biosynthesis of pyridoxal 5'-phosphate. The resulting ammonia molecule is channeled to the active site of PdxS. This Pelotomaculum thermopropionicum (strain DSM 13744 / JCM 10971 / SI) protein is Pyridoxal 5'-phosphate synthase subunit PdxT.